The following is a 380-amino-acid chain: N-acetylcysteine deacetylase (380 aa).

Residues C98, H100, E134, H158, and H350 each coordinate Ni(2+).

It belongs to the peptidase M20 family. A divalent metal cation serves as cofactor.

The catalysed reaction is N-acetyl-L-cysteine + H2O = L-cysteine + acetate. It participates in amino-acid biosynthesis; L-cysteine biosynthesis. Its function is as follows. Probably catalyzes the deacetylation of N-acetylcysteine (NAC) to acetate and cysteine. Is involved in a S-(2-succino)cysteine (2SC) degradation pathway that allows B.subtilis to grow on 2SC as a sole sulfur source, via its metabolization to cysteine. This chain is N-acetylcysteine deacetylase, found in Bacillus subtilis (strain 168).